The primary structure comprises 600 residues: Proton channel OTOP1 (600 aa).

The tract at residues M1–S50 is disordered. Over M1 to A56 the chain is Cytoplasmic. Over residues A7–A27 the composition is skewed to low complexity. A helical transmembrane segment spans residues E57–W78. Residues A79–G86 are Extracellular-facing. The helical transmembrane segment at K87–G110 threads the bilayer. The Cytoplasmic segment spans residues R111–A128. Residues R129–A151 form a helical membrane-spanning segment. Topologically, residues Y152–S161 are extracellular. The helical transmembrane segment at A162–A186 threads the bilayer. Over K187–K194 the chain is Cytoplasmic. The chain crosses the membrane as a helical span at residues T195–K221. The Extracellular segment spans residues H222–S262. Residues H263–K288 traverse the membrane as a helical segment. Over N289–V309 the chain is Cytoplasmic. A helical membrane pass occupies residues L310–I332. Residues H333–E342 lie on the Extracellular side of the membrane. Residues S343–W368 traverse the membrane as a helical segment. The Cytoplasmic segment spans residues I369–K386. Residues L387 to A411 traverse the membrane as a helical segment. Residues C412 to W421 lie on the Extracellular side of the membrane. A helical membrane pass occupies residues Y422 to I442. Over E443–R532 the chain is Cytoplasmic. Residues N533–F551 traverse the membrane as a helical segment. The Extracellular segment spans residues G552–E569. The helical transmembrane segment at P570 to L593 threads the bilayer. At F594–I600 the chain is on the cytoplasmic side.

It belongs to the otopetrin family. As to quaternary structure, homodimer. Interacts with STAT1, independently of STAT1 phosphorylation status.

The protein resides in the cell membrane. It is found in the cell projection. It localises to the microvillus. The catalysed reaction is H(+)(in) = H(+)(out). Activated by both acid and alkali, with proton influx in response to extracellular acid and proton efflux during alkali stimulation. Inhibited by Zn(2+); this inhibition is thought to be pH-sensitive. Currents evoked in response to mild acid (pH 6.0) stimulus may also be mildly potentiated by exposure to Zn(2+). Activated by NH(4)Cl. Its function is as follows. Proton-selective ion channel. Biphasically modulated by acid and alkali, mediating proton influx and efflux in response to extracellular acid and base stimulation, respectively. Sour taste receptor, which carries inward currents in response to extracellular acidification. Sensor for ammonium chloride (NH(4)Cl) in taste receptor cells. NH(4)Cl acts by increasing the intracellular pH, thereby generating a driving force for proton entry through OTOP1 channel. Might also participate in alkaline sensation. Plays a role in the regulation of Ca(2+) flux in response to purigenic (ATP, ADP and UDP) stimuli, leading to increase in cytosolic Ca(2+) due to influx of extracellular calcium. May play this role by inhibiting P2Y purinoceptor-mediated Ca(2+) release in a Ca(2+)-dependent manner and promote an influx of Ca(2+) in response to ATP. Through this mechanism and possibly others, plays a role in the formation and function of calcium carbonate-based structures in the vestibular system of the inner ear, called otoconia, that sense gravity and linear acceleration. In obesity, may attenuate adipose tissue inflammation, through the negative regulation of IFNG signaling, hence may play an adaptive role in the maintainance of metabolic homeostasis. Following alkali activation, may also be permeable Na(+), K(+), Cs(+) and Li(+). The polypeptide is Proton channel OTOP1 (Rattus norvegicus (Rat)).